Here is a 226-residue protein sequence, read N- to C-terminus: Cytidylate kinase (226 aa).

Residue 10-18 (GPASSGKST) participates in ATP binding.

It localises to the cytoplasm. It carries out the reaction CMP + ATP = CDP + ADP. It catalyses the reaction dCMP + ATP = dCDP + ADP. The protein is Cytidylate kinase of Streptococcus pyogenes serotype M6 (strain ATCC BAA-946 / MGAS10394).